Reading from the N-terminus, the 515-residue chain is Tripartite motif-containing protein 5 (515 aa).

An N-acetylalanine modification is found at Ala2. The RING-type zinc-finger motif lies at 15–60; the sequence is CPICLELLTEPLSLPCGHSLCQACITANHKESMLYKEEERSCPVCR. The residue at position 87 (Ser87) is a Phosphoserine. Residues 92 to 133 form a B box-type zinc finger; the sequence is QKVDHCARHGEKLLLFCQEDSKVICWLCERSQEHRGHHTFLM. Zn(2+) is bound by residues Cys97, His100, Cys119, and His125. Residues 137–225 adopt a coiled-coil conformation; that stretch reads AQEYHVKLQT…LTKSETEMVQ (89 aa). Residues 187 to 200 form a required for interaction with GABARAP and for autophagy region; that stretch reads FEQLREILDWEESN. The B30.2/SPRY domain maps to 283–515; the sequence is LKGMLDMFRE…VPMTLCSPSS (233 aa).

This sequence belongs to the TRIM/RBCC family. Can form homodimers and homotrimers. In addition to lower-order dimerization, also exhibits a higher-order multimerization and both low- and high-order multimerizations are essential for its restriction activity. Interacts with BTBD1 and BTBD2. Interacts with PSMC4, PSMC5, PSMD7 and HSPA8/HSC70. Interacts (via B30.2/SPRY domain) with HSPA1A/B. Interacts with PSMC2, MAP3K7/TAK1, TAB2 and TAB3. Interacts with SQSTM1. Interacts with TRIM6 and TRIM34. Interacts with ULK1 (phosphorylated form), GABARAP, GABARAPL1, GABARAPL2, MAP1LC3A, MAP1LC3C and BECN1. In terms of processing, degraded in a proteasome-independent fashion in the absence of viral infection but in a proteasome-dependent fashion following exposure to restriction sensitive virus. Autoubiquitinated in a RING finger- and UBE2D2-dependent manner. Monoubiquitinated by TRIM21. Deubiquitinated by Yersinia YopJ. Ubiquitination may not lead to proteasomal degradation.

The protein localises to the cytoplasm. Its subcellular location is the nucleus. The catalysed reaction is S-ubiquitinyl-[E2 ubiquitin-conjugating enzyme]-L-cysteine + [acceptor protein]-L-lysine = [E2 ubiquitin-conjugating enzyme]-L-cysteine + N(6)-ubiquitinyl-[acceptor protein]-L-lysine.. Its pathway is protein modification; protein ubiquitination. Capsid-specific restriction factor that prevents infection from non-host-adapted retroviruses. Blocks viral replication early in the life cycle, after viral entry but before reverse transcription. In addition to acting as a capsid-specific restriction factor, also acts as a pattern recognition receptor that activates innate immune signaling in response to the retroviral capsid lattice. Binding to the viral capsid triggers its E3 ubiquitin ligase activity, and in concert with the heterodimeric ubiquitin conjugating enzyme complex UBE2V1-UBE2N (also known as UBC13-UEV1A complex) generates 'Lys-63'-linked polyubiquitin chains, which in turn are catalysts in the autophosphorylation of the MAP3K7/TAK1 complex (includes TAK1, TAB2, and TAB3). Activation of the MAP3K7/TAK1 complex by autophosphorylation results in the induction and expression of NF-kappa-B and MAPK-responsive inflammatory genes, thereby leading to an innate immune response in the infected cell. Restricts infection by human immunodeficiency virus type 1 (HIV-1) and N-tropic murine leukemia virus (N-MLV). Plays a role in regulating autophagy through activation of autophagy regulator BECN1 by causing its dissociation from its inhibitors BCL2 and TAB2. The protein is Tripartite motif-containing protein 5 (TRIM5) of Chlorocebus pygerythrus (Vervet monkey).